We begin with the raw amino-acid sequence, 456 residues long: Argininosuccinate lyase (456 aa).

The protein belongs to the lyase 1 family. Argininosuccinate lyase subfamily.

Its subcellular location is the cytoplasm. It catalyses the reaction 2-(N(omega)-L-arginino)succinate = fumarate + L-arginine. Its pathway is amino-acid biosynthesis; L-arginine biosynthesis; L-arginine from L-ornithine and carbamoyl phosphate: step 3/3. This chain is Argininosuccinate lyase, found in Listeria monocytogenes serotype 4a (strain HCC23).